Consider the following 375-residue polypeptide: Lipid-A-disaccharide synthase (375 aa).

Belongs to the LpxB family.

The enzyme catalyses a lipid X + a UDP-2-N,3-O-bis[(3R)-3-hydroxyacyl]-alpha-D-glucosamine = a lipid A disaccharide + UDP + H(+). It participates in bacterial outer membrane biogenesis; LPS lipid A biosynthesis. Condensation of UDP-2,3-diacylglucosamine and 2,3-diacylglucosamine-1-phosphate to form lipid A disaccharide, a precursor of lipid A, a phosphorylated glycolipid that anchors the lipopolysaccharide to the outer membrane of the cell. The chain is Lipid-A-disaccharide synthase from Pseudomonas putida (strain GB-1).